The sequence spans 78 residues: Large ribosomal subunit protein uL24 (78 aa).

The protein belongs to the universal ribosomal protein uL24 family. Part of the 50S ribosomal subunit.

One of two assembly initiator proteins, it binds directly to the 5'-end of the 23S rRNA, where it nucleates assembly of the 50S subunit. Functionally, one of the proteins that surrounds the polypeptide exit tunnel on the outside of the subunit. The sequence is that of Large ribosomal subunit protein uL24 from Campylobacter curvus (strain 525.92).